We begin with the raw amino-acid sequence, 184 residues long: Protein PPLZ12 (184 aa).

The chain is Protein PPLZ12 (PPLZ12) from Lupinus polyphyllus (Large-leaved lupine).